Consider the following 837-residue polypeptide: Ribosome-releasing factor 2, mitochondrial (837 aa).

Residues 1–29 (MFSINARTKVPIWVPFIARKGFSMSTRQL) constitute a mitochondrion transit peptide. The tr-type G domain maps to 40–331 (LNTRNIGIIA…GVVDYLPSPL (292 aa)). GTP is bound by residues 49–56 (AHIDAGKT), 113–117 (DTPGH), and 167–170 (NKMD). A disordered region spans residues 338 to 359 (ITASTSKVSKKQKQKKNSKVSS). Over residues 345-355 (VSKKQKQKKNS) the composition is skewed to basic residues.

Belongs to the TRAFAC class translation factor GTPase superfamily. Classic translation factor GTPase family. EF-G/EF-2 subfamily.

It localises to the mitochondrion. Its function is as follows. Mitochondrial GTPase that mediates the disassembly of ribosomes from messenger RNA at the termination of mitochondrial protein biosynthesis. Not involved in the GTP-dependent ribosomal translocation step during translation elongation. The polypeptide is Ribosome-releasing factor 2, mitochondrial (Meyerozyma guilliermondii (strain ATCC 6260 / CBS 566 / DSM 6381 / JCM 1539 / NBRC 10279 / NRRL Y-324) (Yeast)).